The primary structure comprises 236 residues: Leucyl/phenylalanyl-tRNA--protein transferase (236 aa).

This sequence belongs to the L/F-transferase family.

The protein localises to the cytoplasm. The catalysed reaction is N-terminal L-lysyl-[protein] + L-leucyl-tRNA(Leu) = N-terminal L-leucyl-L-lysyl-[protein] + tRNA(Leu) + H(+). It carries out the reaction N-terminal L-arginyl-[protein] + L-leucyl-tRNA(Leu) = N-terminal L-leucyl-L-arginyl-[protein] + tRNA(Leu) + H(+). The enzyme catalyses L-phenylalanyl-tRNA(Phe) + an N-terminal L-alpha-aminoacyl-[protein] = an N-terminal L-phenylalanyl-L-alpha-aminoacyl-[protein] + tRNA(Phe). Its function is as follows. Functions in the N-end rule pathway of protein degradation where it conjugates Leu, Phe and, less efficiently, Met from aminoacyl-tRNAs to the N-termini of proteins containing an N-terminal arginine or lysine. This is Leucyl/phenylalanyl-tRNA--protein transferase from Shewanella sp. (strain MR-4).